The primary structure comprises 415 residues: Probable G-protein coupled receptor 19 (415 aa).

Over Met-1 to Ser-69 the chain is Extracellular. N-linked (GlcNAc...) asparagine glycans are attached at residues Asn-25 and Asn-52. The chain crosses the membrane as a helical span at residues Ile-70 to Ile-90. Residues His-91 to Tyr-102 lie on the Cytoplasmic side of the membrane. A helical transmembrane segment spans residues Phe-103 to Leu-123. Residues Leu-124–Tyr-143 are Extracellular-facing. The cysteines at positions 138 and 210 are disulfide-linked. A helical membrane pass occupies residues Phe-144 to Ile-161. Over Asp-162–Lys-182 the chain is Cytoplasmic. The chain crosses the membrane as a helical span at residues Met-183 to Gly-203. Residues Ser-204–Thr-221 lie on the Extracellular side of the membrane. A helical transmembrane segment spans residues Ala-222–Phe-242. The Cytoplasmic segment spans residues Tyr-243–Met-277. Residues Phe-278 to Trp-298 traverse the membrane as a helical segment. Residues His-299–Ser-309 lie on the Extracellular side of the membrane. Residues Leu-310–Ser-325 traverse the membrane as a helical segment. At Lys-326–Val-415 the chain is on the cytoplasmic side.

It belongs to the G-protein coupled receptor 1 family. In terms of tissue distribution, abundant expression in the brain.

Its subcellular location is the cell membrane. Its function is as follows. G-protein coupled receptor that plays a role in the regulation of circadian rhythms and energy metabolism. Participates in maintaining proper circadian gene expression in the suprachiasmatic nucleus (SCN), the locus of the master circadian clock in the brain. May function as a coordinator of aging-associated metabolic dysfunction, stress response, DNA integrity management, and eventual senescence. Upon binding to adropin, modulates mitochondrial energy metabolism via the p44/42-PDK4 signaling pathway, influencing pyruvate dehydrogenase activity. This chain is Probable G-protein coupled receptor 19 (GPR19), found in Homo sapiens (Human).